We begin with the raw amino-acid sequence, 338 residues long: 1-aminocyclopropane-1-carboxylate deaminase (338 aa).

The residue at position 51 (Lys51) is an N6-(pyridoxal phosphate)lysine. Ser78 (nucleophile) is an active-site residue.

Belongs to the ACC deaminase/D-cysteine desulfhydrase family. As to quaternary structure, homotrimer. It depends on pyridoxal 5'-phosphate as a cofactor.

It catalyses the reaction 1-aminocyclopropane-1-carboxylate + H2O = 2-oxobutanoate + NH4(+). Functionally, catalyzes a cyclopropane ring-opening reaction, the irreversible conversion of 1-aminocyclopropane-1-carboxylate (ACC) to ammonia and alpha-ketobutyrate. Allows growth on ACC as a nitrogen source. The chain is 1-aminocyclopropane-1-carboxylate deaminase from Acidovorax ebreus (strain TPSY) (Diaphorobacter sp. (strain TPSY)).